Consider the following 214-residue polypeptide: A-type ATP synthase subunit D (214 aa).

This sequence belongs to the V-ATPase D subunit family. Has multiple subunits with at least A(3), B(3), C, D, E, F, H, I and proteolipid K(x).

The protein localises to the cell membrane. Its function is as follows. Component of the A-type ATP synthase that produces ATP from ADP in the presence of a proton gradient across the membrane. The protein is A-type ATP synthase subunit D of Thermococcus gammatolerans (strain DSM 15229 / JCM 11827 / EJ3).